The following is a 404-amino-acid chain: MRSQPHVLGIVLAGGEGKRLFPLTADRAKPAVPFGGAYRLIDFVLSNLVNAGYLRLCVLTQYKSHSLDRHISQTWRLSGFAGEYITPVPAQQRLGPRWYTGSADAIMQSLNLIYDEDPDYIVVFGADHVYRMDPEQMVSHHIDSGAGVTVAGIRVPRSEASAFGCIDSDESGRITQFLEKPAHPPGTPDDPNMTFASMGNYVFTTKVLVDSIRADAENSDSDHDMGGDIIPALVEAGEAGVYDFADNQVPGATDRDHGYWRDVGTIDAFYDAHMDLVSVHPVFNLYNKHWPIRGAAENLPPAKFAQGGLAQECIVGSGSILSAATVRNSVLSSNVVVDDGATVEGSVLMPGVRIGRGAVVRRAILDKNVVVGEGEIIGVDLDRDRERFAVSNGGVVTVGKGVWV.

Residues Tyr-99, Gly-164, 179 to 180, and Ser-197 each bind alpha-D-glucose 1-phosphate; that span reads EK.

It belongs to the bacterial/plant glucose-1-phosphate adenylyltransferase family. In terms of assembly, homotetramer.

The enzyme catalyses alpha-D-glucose 1-phosphate + ATP + H(+) = ADP-alpha-D-glucose + diphosphate. It participates in glycan biosynthesis; glycogen biosynthesis. Functionally, involved in the biosynthesis of ADP-glucose, a building block required for the elongation reactions to produce glycogen. Catalyzes the reaction between ATP and alpha-D-glucose 1-phosphate (G1P) to produce pyrophosphate and ADP-Glc. This chain is Glucose-1-phosphate adenylyltransferase, found in Nocardia farcinica (strain IFM 10152).